The following is a 174-amino-acid chain: NADH-quinone oxidoreductase subunit C (174 aa).

This sequence belongs to the complex I 30 kDa subunit family. As to quaternary structure, NDH-1 is composed of 14 different subunits. Subunits NuoB, C, D, E, F, and G constitute the peripheral sector of the complex.

Its subcellular location is the cell membrane. The catalysed reaction is a quinone + NADH + 5 H(+)(in) = a quinol + NAD(+) + 4 H(+)(out). Its function is as follows. NDH-1 shuttles electrons from NADH, via FMN and iron-sulfur (Fe-S) centers, to quinones in the respiratory chain. The immediate electron acceptor for the enzyme in this species is believed to be ubiquinone. Couples the redox reaction to proton translocation (for every two electrons transferred, four hydrogen ions are translocated across the cytoplasmic membrane), and thus conserves the redox energy in a proton gradient. The protein is NADH-quinone oxidoreductase subunit C of Roseiflexus castenholzii (strain DSM 13941 / HLO8).